Reading from the N-terminus, the 240-residue chain is Large ribosomal subunit protein bL25 (240 aa).

Disordered regions lie at residues 1 to 23 (MATV…ARAE) and 207 to 240 (PAAA…AKKK).

The protein belongs to the bacterial ribosomal protein bL25 family. CTC subfamily. As to quaternary structure, part of the 50S ribosomal subunit; part of the 5S rRNA/L5/L18/L25 subcomplex. Contacts the 5S rRNA. Binds to the 5S rRNA independently of L5 and L18.

This is one of the proteins that binds to the 5S RNA in the ribosome where it forms part of the central protuberance. The chain is Large ribosomal subunit protein bL25 from Rhodopseudomonas palustris (strain BisB18).